Here is a 44-residue protein sequence, read N- to C-terminus: Non-structural protein 7b (44 aa).

The chain crosses the membrane as a helical span at residues 9–29; that stretch reads FYLCFLAFLLFLVLIMLLIFW.

The protein resides in the host membrane. In Bat coronavirus HKU3 (BtCoV), this protein is Non-structural protein 7b.